The chain runs to 170 residues: Sec-independent protein translocase protein TATA, chloroplastic (170 aa).

The transit peptide at 1-61 (MGIPVVVPVA…GGSGGDLAAV (61 aa)) directs the protein to the chloroplast. The Lumenal portion of the chain corresponds to 62-84 (AASVAARPRRAGSGGGGALGCKC). Residues 85-105 (LFGLGVPELAVIAGVAALVFG) traverse the membrane as a helical segment. The Stromal segment spans residues 106 to 170 (PKQLPEIGRS…LEASSSKESA (65 aa)). Basic and acidic residues predominate over residues 130–139 (FETELKKEPG). Residues 130-170 (FETELKKEPGEGGDQPPPATPTAVSGGEEKGLEASSSKESA) form a disordered region.

Belongs to the TatA/E family. In thylakoid membranes, TATC and TATB form a large receptor complex, containing about eight TATC-TATB pairs, which binds the precursor protein. Twin arginine signal peptide promotes pH-triggered docking of TATA oligomers to TATC-TATB receptor complex, inducing a conformational switch of TATA that results in activation of the translocase. TATA dissociates from TATC-TATB upon completion of translocation.

It is found in the plastid. Its subcellular location is the chloroplast thylakoid membrane. Part of the twin-arginine translocation (Tat) system that transports large folded proteins containing a characteristic twin-arginine motif in their signal peptide across the thylakoid membrane. Involved in delta pH-dependent protein transport required for chloroplast development, especially thylakoid membrane formation. TATC and TATB mediate precursor recognition, whereas TATA facilitates translocation. The protein is Sec-independent protein translocase protein TATA, chloroplastic of Zea mays (Maize).